The following is a 1400-amino-acid chain: Bromodomain-containing protein 4 (1400 aa).

Residues 1–58 (MSTESGPGTRLRNLPVMGDGLETSQMSTTQAQAQPQPANAASTNPPPPETSNPNKPKR) form a disordered region. Positions 23-43 (TSQMSTTQAQAQPQPANAAST) are enriched in low complexity. The region spanning 58–164 (RQTNQLQYLL…KLFLQKINEL (107 aa)) is the Bromo 1 domain. Lys99 participates in a covalent cross-link: Glycyl lysine isopeptide (Lys-Gly) (interchain with G-Cter in SUMO2). Disordered regions lie at residues 176–353 (AKGR…KISE) and 461–616 (EPEE…YEEK). Residues 197–212 (PNTTQASTSPQTQTPQ) are compositionally biased toward low complexity. The segment covering 244–267 (PPQPLQTPSPVPPQPPPPPAPVPQ) has biased composition (pro residues). Positions 321–337 (PRRESSRPVKPPKKDVP) are enriched in basic and acidic residues. The Bromo 2 domain occupies 349-458 (SKISEQLKCC…DVFEMRFAKM (110 aa)). Residue Ser471 is modified to Phosphoserine. A compositionally biased stretch (low complexity) spans 479–498 (KVVAPPSSSDSSSDSSSDSD). Phosphoserine; by CK2 is present on residues Ser485, Ser489, and Ser493. The NPS region stretch occupies residues 485–504 (SSSDSSSDSSSDSDSSTDDS). Ser495 carries the phosphoserine modification. Phosphoserine; by CK2 is present on residues Ser499, Ser500, and Ser504. The interval 525 to 580 (QLAALSQPQQNKPKKKEKDKKEKKKEKHKKKEEVEENKKSKTKELPPKKTKKNNSS) is BID region. A compositionally biased stretch (basic residues) spans 536 to 554 (KPKKKEKDKKEKKKEKHKK). A compositionally biased stretch (basic and acidic residues) spans 555-571 (KEEVEENKKSKTKELPP). Lys586 is covalently cross-linked (Glycyl lysine isopeptide (Lys-Gly) (interchain with G-Cter in SUMO2)). One can recognise an NET domain in the interval 601–683 (ESEEEDKCKP…SCLRKKRKPQ (83 aa)). At Ser602 the chain carries Phosphoserine. A compositionally biased stretch (basic and acidic residues) spans 606–616 (DKCKPMSYEEK). Glycyl lysine isopeptide (Lys-Gly) (interchain with G-Cter in SUMO2) cross-links involve residues Lys646 and Lys695. The tract at residues 675–1125 (CLRKKRKPQA…GCPPASPAAV (451 aa)) is disordered. Residues 700 to 713 (SSSESESTSESSSS) are compositionally biased toward low complexity. Positions 725–745 (KSKKKGHTGRDQKKHHHHHHP) are enriched in basic residues. Pro residues-rich tracts occupy residues 748-787 (QPAPAPVPQQPPPPPQQPPPPPPPQQQQQQPPPPPPPPSM), 835-848 (PELPPHLPQPPEHS), 883-892 (PPKPTRPPAV), and 900-909 (PLLPQPPMAQ). Positions 928 to 938 (MQMQLYLQQLQ) are enriched in low complexity. 3 stretches are compositionally biased toward pro residues: residues 955 to 966 (QPPPPLPPPPHP), 975 to 1000 (PQPPPPPPPQPQPPPQQQHQPPPRPV), and 1013 to 1037 (QPPPPPGQQPTHPPPGQQPPPPQPA). Residues 1050 to 1400 (RHHKSDPYSA…LLSIFEENLF (351 aa)) form a C-terminal (CTD) region region. Lys1053 participates in a covalent cross-link: Glycyl lysine isopeptide (Lys-Gly) (interchain with G-Cter in SUMO2). A compositionally biased stretch (polar residues) spans 1075–1084 (QMPQFQSLTH). Residues 1085-1095 (QSPPQQNVQPK) show a composition bias toward low complexity. Lys1147 is subject to N6-acetyllysine; alternate. Lys1147 participates in a covalent cross-link: Glycyl lysine isopeptide (Lys-Gly) (interchain with G-Cter in SUMO1); alternate. Lys1147 participates in a covalent cross-link: Glycyl lysine isopeptide (Lys-Gly) (interchain with G-Cter in SUMO2); alternate. Residues Ser1153 and Ser1162 each carry the phosphoserine modification. The segment at 1155–1377 (IIRSEPFSTS…KREQERRRRE (223 aa)) is disordered. The span at 1211–1232 (PDKDKQKQEPKTPVAPKKDLKI) shows a compositional bias: basic and acidic residues. Lys1233 is covalently cross-linked (Glycyl lysine isopeptide (Lys-Gly) (interchain with G-Cter in SUMO2)). 2 positions are modified to phosphoserine: Ser1237 and Ser1240. The segment covering 1247–1258 (TTPSSTAKSSSD) has biased composition (low complexity). Over residues 1259–1320 (SFEHFRRAAR…AHEEARRRQE (62 aa)) the composition is skewed to basic and acidic residues. Residues 1321-1357 (QQQQQQQQRQEQQQQQQQAAAVAAASAPQAQSSQPQS) show a composition bias toward low complexity. Residues 1361 to 1377 (QQRELARKREQERRRRE) are compositionally biased toward basic and acidic residues.

The protein belongs to the BET family. As to quaternary structure, binds acetylated histone H4. Interacts with p53/TP53; the interaction is direct. Interacts (via CTD region) with CDK9 and CCNT1, acting as an associated component of P-TEFb complex. Interacts with RELA (when acetylated at 'Lys-310'). Interacts (via NET domain) with NSD3, CHD4, BICRA and ATAD5. The interaction with BICRA bridges BRD4 to the GBAF complex. Interacts (via NET domain) with JMJD6 (via JmjC and N-terminal domains); the interaction is stronger in presence of ssRNA and recruits JMJD6 on distal enhancers. Interacts with NSD3. Interacts with NIPBL. Post-translationally, phosphorylation by CK2 disrupt the intramolecular binding between the bromo domain 2 and the NPS region and promotes binding between the NPS and the BID regions, leading to activate the protein and promote binding to acetylated histones. In absence of phosphorylation, BRD4 does not localize to p53/TP53 target gene promoters, phosphorylation promoting recruitment to p53/TP53 target promoters.

Its subcellular location is the nucleus. The protein resides in the chromosome. In terms of biological role, chromatin reader protein that recognizes and binds acetylated histones and plays a key role in transmission of epigenetic memory across cell divisions and transcription regulation. Remains associated with acetylated chromatin throughout the entire cell cycle and provides epigenetic memory for postmitotic G1 gene transcription by preserving acetylated chromatin status and maintaining high-order chromatin structure. During interphase, plays a key role in regulating the transcription of signal-inducible genes by associating with the P-TEFb complex and recruiting it to promoters. Also recruits P-TEFb complex to distal enhancers, so called anti-pause enhancers in collaboration with JMJD6. BRD4 and JMJD6 are required to form the transcriptionally active P-TEFb complex by displacing negative regulators such as HEXIM1 and 7SKsnRNA complex from P-TEFb, thereby transforming it into an active form that can then phosphorylate the C-terminal domain (CTD) of RNA polymerase II. Regulates differentiation of naive CD4(+) T-cells into T-helper Th17 by promoting recruitment of P-TEFb to promoters. Promotes phosphorylation of 'Ser-2' of the C-terminal domain (CTD) of RNA polymerase II. According to a report, directly acts as an atypical protein kinase and mediates phosphorylation of 'Ser-2' of the C-terminal domain (CTD) of RNA polymerase II; these data however need additional evidences in vivo. In addition to acetylated histones, also recognizes and binds acetylated RELA, leading to further recruitment of the P-TEFb complex and subsequent activation of NF-kappa-B. Also acts as a regulator of p53/TP53-mediated transcription: following phosphorylation by CK2, recruited to p53/TP53 specific target promoters. The protein is Bromodomain-containing protein 4 (Brd4) of Mus musculus (Mouse).